Consider the following 986-residue polypeptide: Probable ATP-dependent RNA helicase ddx42 (986 aa).

Disordered stretches follow at residues 1 to 149 (MSKR…DEDD), 165 to 192 (AAID…DIDN), and 206 to 252 (QLAN…IEPL). Residues 29 to 82 (SNINNNNNSNNNNNNNNNNNNNNNNNNNKNNIGTGINLNIKNNNNINNNNNKSG) are compositionally biased toward low complexity. Residues 105–117 (PPKSSMTTLNKSP) show a composition bias toward polar residues. Residues 119 to 137 (NFENASSNNNNNNNNNNQE) show a composition bias toward low complexity. Over residues 217–236 (DDDVDYSSLDDDDGYFDDEE) the composition is skewed to acidic residues. The Q motif signature appears at 305 to 333 (TSFGHYGFDDILLQAIAKQSIETPTPIQK). A Helicase ATP-binding domain is found at 336 to 511 (IPIALSGRDL…RTILSDPIKI (176 aa)). Position 349-356 (349-356 (AKTGSGKT)) interacts with ATP. Positions 459–462 (DEAD) match the DEAD box motif. The Helicase C-terminal domain occupies 522–684 (DITQIVQVLK…FVPPELIDVA (163 aa)). The segment at 688 to 986 (PHFKRERGGG…FNQRSQYNRR (299 aa)) is disordered. The span at 696–723 (GGGGGSNRGRGRGGGGVGYRRNSRGGGV) shows a compositional bias: gly residues. 2 stretches are compositionally biased toward low complexity: residues 753–764 (NPNNTDNSEINN) and 771–978 (NNEN…NNFN).

It belongs to the DEAD box helicase family. DDX42 subfamily.

The protein localises to the nucleus. The catalysed reaction is ATP + H2O = ADP + phosphate + H(+). In terms of biological role, probable ATP-dependent RNA helicase which may bind to partially double-stranded RNAs (dsRNAs) in order to unwind RNA secondary structures. This is Probable ATP-dependent RNA helicase ddx42 (ddx42) from Dictyostelium discoideum (Social amoeba).